The chain runs to 703 residues: Peptide transporter CstA (703 aa).

16 helical membrane-spanning segments follow: residues T6–L26, G29–Y49, V87–L107, L118–I138, V162–V182, P190–M210, A221–A241, L256–L276, L282–A302, G319–I339, A374–I394, L463–V483, G514–I534, F547–V567, Y574–I594, and A660–I680.

Belongs to the peptide transporter carbon starvation (CstA) (TC 2.A.114) family.

It is found in the cell inner membrane. Functionally, involved in the uptake of dipeptides and tripeptides. May influence host-pathogen interactions. Involved in motility and agglutination, and has a role in stimulation of dendritic cells. This is Peptide transporter CstA from Campylobacter jejuni subsp. jejuni serotype O:2 (strain ATCC 700819 / NCTC 11168).